The chain runs to 311 residues: HPr kinase/phosphorylase (311 aa).

Catalysis depends on residues H139 and K160. 154 to 161 (GQSGVGKS) is an ATP binding site. S161 lines the Mg(2+) pocket. The active-site Proton acceptor; for phosphorylation activity. Proton donor; for dephosphorylation activity is D178. Residues 202–211 (LEIRGIGIID) are important for the catalytic mechanism of both phosphorylation and dephosphorylation. Residue E203 coordinates Mg(2+). The active site involves R244. The important for the catalytic mechanism of dephosphorylation stretch occupies residues 265 to 270 (PVRPGR).

It belongs to the HPrK/P family. In terms of assembly, homohexamer. Mg(2+) is required as a cofactor.

The catalysed reaction is [HPr protein]-L-serine + ATP = [HPr protein]-O-phospho-L-serine + ADP + H(+). It catalyses the reaction [HPr protein]-O-phospho-L-serine + phosphate + H(+) = [HPr protein]-L-serine + diphosphate. Its function is as follows. Catalyzes the ATP- as well as the pyrophosphate-dependent phosphorylation of a specific serine residue in HPr, a phosphocarrier protein of the phosphoenolpyruvate-dependent sugar phosphotransferase system (PTS). HprK/P also catalyzes the pyrophosphate-producing, inorganic phosphate-dependent dephosphorylation (phosphorolysis) of seryl-phosphorylated HPr (P-Ser-HPr). The two antagonistic activities of HprK/P are regulated by several intracellular metabolites, which change their concentration in response to the absence or presence of rapidly metabolisable carbon sources (glucose, fructose, etc.) in the growth medium. Therefore, by controlling the phosphorylation state of HPr, HPrK/P is a sensor enzyme that plays a major role in the regulation of carbon metabolism and sugar transport: it mediates carbon catabolite repression (CCR), and regulates PTS-catalyzed carbohydrate uptake and inducer exclusion. The protein is HPr kinase/phosphorylase of Exiguobacterium sp. (strain ATCC BAA-1283 / AT1b).